The sequence spans 417 residues: MSSAFDFEPQPRRASVAVDVGGVIVGGGAPVVVQSMTNTDTADIDATVAQVAALHKAGSELVRITVDRDESAAAVPKIRERLLRLGIDVPLVGDFHYIGHKLLADHPACAEALAKYRINPGNVGFKDKKDKQFAEIIEMAIRYDKPVRIGVNWGSLDQELLTRLMDANQANGSPLTAQQVMRETIVQSALLSAELAEELGLPRSRIILSAKVSGVQDLIAVYAMLAARSVHALHLGLTEAGMGTKGIVASSASLGILMQQGIGDTIRISLTPEPGGDRTREVQVAQELLQVMGFRQFIPVVAACPGCGRTTSTVFQELAQKIQEDIRASMPVWREKYPGVEALKVAVMGCIVNGPGESKHADIGISLPGTGEMPAAPVFIDGQKALTLRGPKIAEDFQLLVADYIEKRFGHGQAAAE.

Residues Cys304, Cys307, Cys350, and Glu357 each contribute to the [4Fe-4S] cluster site.

This sequence belongs to the IspG family. The cofactor is [4Fe-4S] cluster.

It carries out the reaction (2E)-4-hydroxy-3-methylbut-2-enyl diphosphate + oxidized [flavodoxin] + H2O + 2 H(+) = 2-C-methyl-D-erythritol 2,4-cyclic diphosphate + reduced [flavodoxin]. The protein operates within isoprenoid biosynthesis; isopentenyl diphosphate biosynthesis via DXP pathway; isopentenyl diphosphate from 1-deoxy-D-xylulose 5-phosphate: step 5/6. Its function is as follows. Converts 2C-methyl-D-erythritol 2,4-cyclodiphosphate (ME-2,4cPP) into 1-hydroxy-2-methyl-2-(E)-butenyl 4-diphosphate. The polypeptide is 4-hydroxy-3-methylbut-2-en-1-yl diphosphate synthase (flavodoxin) (Rhizobium meliloti (strain 1021) (Ensifer meliloti)).